The sequence spans 585 residues: Arginine--tRNA ligase (585 aa).

Positions Ala-130–His-140 match the 'HIGH' region motif.

Belongs to the class-I aminoacyl-tRNA synthetase family. As to quaternary structure, monomer.

It is found in the cytoplasm. It carries out the reaction tRNA(Arg) + L-arginine + ATP = L-arginyl-tRNA(Arg) + AMP + diphosphate. In Methylorubrum extorquens (strain CM4 / NCIMB 13688) (Methylobacterium extorquens), this protein is Arginine--tRNA ligase.